A 362-amino-acid polypeptide reads, in one-letter code: UDP-N-acetylglucosamine--N-acetylmuramyl-(pentapeptide) pyrophosphoryl-undecaprenol N-acetylglucosamine transferase (362 aa).

The UDP-N-acetyl-alpha-D-glucosamine site is built by Arg-166, Ser-196, and Gln-290.

This sequence belongs to the glycosyltransferase 28 family. MurG subfamily.

The protein resides in the cell membrane. The catalysed reaction is Mur2Ac(oyl-L-Ala-gamma-D-Glu-L-Lys-D-Ala-D-Ala)-di-trans,octa-cis-undecaprenyl diphosphate + UDP-N-acetyl-alpha-D-glucosamine = beta-D-GlcNAc-(1-&gt;4)-Mur2Ac(oyl-L-Ala-gamma-D-Glu-L-Lys-D-Ala-D-Ala)-di-trans,octa-cis-undecaprenyl diphosphate + UDP + H(+). Its pathway is cell wall biogenesis; peptidoglycan biosynthesis. Functionally, cell wall formation. Catalyzes the transfer of a GlcNAc subunit on undecaprenyl-pyrophosphoryl-MurNAc-pentapeptide (lipid intermediate I) to form undecaprenyl-pyrophosphoryl-MurNAc-(pentapeptide)GlcNAc (lipid intermediate II). The polypeptide is UDP-N-acetylglucosamine--N-acetylmuramyl-(pentapeptide) pyrophosphoryl-undecaprenol N-acetylglucosamine transferase (Staphylococcus carnosus (strain TM300)).